Here is a 309-residue protein sequence, read N- to C-terminus: Probable nitrogen assimilation transcriptional activator (309 aa).

The HTH lysR-type domain maps to 1–57; the sequence is MRLEQLQAFLKVAELGSFQQAALQSEVTQSTISRQIQGLESALKCQLFHRGAQAKLT. The segment at residues 18–38 is a DNA-binding region (H-T-H motif); sequence FQQAALQSEVTQSTISRQIQG.

Belongs to the LysR transcriptional regulatory family.

Its function is as follows. Seems to regulate utilization of fixed nitrogen by controlling the expression of a certain gene(s) involved in nitrogen metabolism. This Synechocystis sp. (strain ATCC 27184 / PCC 6803 / Kazusa) protein is Probable nitrogen assimilation transcriptional activator (ntcB).